Reading from the N-terminus, the 515-residue chain is Protein DETOXIFICATION 42 (515 aa).

Over 1–35 the chain is Cytoplasmic; that stretch reads MMSEDGYNTDFPRNPLYIFFSDFRSVLKFDELGLE. A helical transmembrane segment spans residues 36–56; the sequence is IARIALPAALALTADPIASLV. Residues 57–58 are Extracellular-facing; sequence DT. The helical transmembrane segment at 59–79 threads the bilayer; the sequence is AFIGQIGPVELAAVGVSIALF. Topologically, residues 80–168 are cytoplasmic; sequence NQVSRIAIFP…AKKRNIPSAS (89 aa). Residues 169–189 traverse the membrane as a helical segment; it reads SALIIGGVLGLFQAVFLISAA. Topologically, residues 190 to 211 are extracellular; it reads KPLLSFMGVKHDSPMMRPSQRY. Residues 212 to 232 form a helical membrane-spanning segment; that stretch reads LSLRSLGAPAVLLSLAAQGVF. Residues 233 to 242 lie on the Cytoplasmic side of the membrane; the sequence is RGFKDTTTPL. A helical transmembrane segment spans residues 243–263; the sequence is FATVIGDVTNIILDPIFIFVF. The Extracellular portion of the chain corresponds to 264-266; the sequence is RLG. The helical transmembrane segment at 267–287 threads the bilayer; the sequence is VTGAATAHVISQYLMCGILLW. Topologically, residues 288 to 312 are cytoplasmic; the sequence is KLMGQVDIFNMSTKHLQFCRFMKNG. A helical membrane pass occupies residues 313–333; sequence FLLLMRVIAVTFCVTLSASLA. The Extracellular portion of the chain corresponds to 334–349; sequence AREGSTSMAAFQVCLQ. The chain crosses the membrane as a helical span at residues 350–370; sequence VWLATSLLADGYAVAGQAILA. Topologically, residues 371–390 are cytoplasmic; the sequence is SAFAKKDYKRAAATASRVLQ. Residues 391-411 traverse the membrane as a helical segment; that stretch reads LGLVLGFVLAVILGAGLHFGA. Over 412-423 the chain is Extracellular; sequence RVFTKDDKVLHL. A helical transmembrane segment spans residues 424-444; the sequence is ISIGLPFVAGTQPINALAFVF. Residues 445-453 are Cytoplasmic-facing; it reads DGVNFGASD. A helical transmembrane segment spans residues 454-474; the sequence is FGYAAASLVMVAIVSILCLLF. The Extracellular segment spans residues 475–480; that stretch reads LSSTHG. A helical membrane pass occupies residues 481 to 501; that stretch reads FIGLWFGLTIYMSLRAAVGFW. At 502–515 the chain is on the cytoplasmic side; that stretch reads RIGTGTGPWSFLRS.

The protein belongs to the multi antimicrobial extrusion (MATE) (TC 2.A.66.1) family. As to expression, expressed in roots, but not in shoots. Detected in the mature regions of the root, extending from above the root-hair region to the root-shoot junction.

It is found in the cell membrane. Functionally, citrate transporter critical for aluminum tolerance. Responsible for citrate exudation into the rhizosphere to protect roots from aluminum toxicity. The polypeptide is Protein DETOXIFICATION 42 (Arabidopsis thaliana (Mouse-ear cress)).